The primary structure comprises 187 residues: Core-binding factor subunit beta (187 aa).

S10 carries the post-translational modification Phosphoserine; by CK2. Positions A139 to R187 are disordered. The span at E144–Q170 shows a compositional bias: basic and acidic residues. A Phosphoserine; by PKC modification is found at S159.

This sequence belongs to the CBF-beta family. Heterodimer with RUNX1, RUNX2 and RUNX3. Interacts with COPRS. Found in a complex with PRMT5 and RUNX1. As to expression, expressed in all tissues tested. Highest level in thymus, but also abundantly expressed in muscle, lung and brain.

It is found in the nucleus. Functionally, forms the heterodimeric complex core-binding factor (CBF) with RUNX family proteins (RUNX1, RUNX2, and RUNX3). RUNX members modulate the transcription of their target genes through recognizing the core consensus binding sequence 5'-TGTGGT-3', or very rarely, 5'-TGCGGT-3', within their regulatory regions via their runt domain, while CBFB is a non-DNA-binding regulatory subunit that allosterically enhances the sequence-specific DNA-binding capacity of RUNX. The heterodimers bind to the core site of a number of enhancers and promoters, including murine leukemia virus, polyomavirus enhancer, T-cell receptor enhancers, LCK, IL3 and GM-CSF promoters. CBF complexes repress ZBTB7B transcription factor during cytotoxic (CD8+) T cell development. They bind to RUNX-binding sequence within the ZBTB7B locus acting as transcriptional silencer and allowing for cytotoxic T cell differentiation. In Mus musculus (Mouse), this protein is Core-binding factor subunit beta (Cbfb).